Here is a 291-residue protein sequence, read N- to C-terminus: 4-diphosphocytidyl-2-C-methyl-D-erythritol kinase (291 aa).

The active site involves Lys14. ATP is bound at residue 96-106 (PFGAGLGGGSS). Asp138 is an active-site residue.

Belongs to the GHMP kinase family. IspE subfamily.

The enzyme catalyses 4-CDP-2-C-methyl-D-erythritol + ATP = 4-CDP-2-C-methyl-D-erythritol 2-phosphate + ADP + H(+). It functions in the pathway isoprenoid biosynthesis; isopentenyl diphosphate biosynthesis via DXP pathway; isopentenyl diphosphate from 1-deoxy-D-xylulose 5-phosphate: step 3/6. In terms of biological role, catalyzes the phosphorylation of the position 2 hydroxy group of 4-diphosphocytidyl-2C-methyl-D-erythritol. The sequence is that of 4-diphosphocytidyl-2-C-methyl-D-erythritol kinase from Chlorobium phaeovibrioides (strain DSM 265 / 1930) (Prosthecochloris vibrioformis (strain DSM 265)).